Here is a 523-residue protein sequence, read N- to C-terminus: 2-isopropylmalate synthase (523 aa).

In terms of domain architecture, Pyruvate carboxyltransferase spans 5 to 267; it reads VIIFDTTLRD…HTNINHHEIW (263 aa). Mn(2+) is bound by residues Asp-14, His-202, His-204, and Asn-238. The tract at residues 392–523 is regulatory domain; it reads RLDYFSVQSG…QNKENNKETV (132 aa).

The protein belongs to the alpha-IPM synthase/homocitrate synthase family. LeuA type 1 subfamily. As to quaternary structure, homodimer. The cofactor is Mn(2+).

It localises to the cytoplasm. The catalysed reaction is 3-methyl-2-oxobutanoate + acetyl-CoA + H2O = (2S)-2-isopropylmalate + CoA + H(+). It functions in the pathway amino-acid biosynthesis; L-leucine biosynthesis; L-leucine from 3-methyl-2-oxobutanoate: step 1/4. Catalyzes the condensation of the acetyl group of acetyl-CoA with 3-methyl-2-oxobutanoate (2-ketoisovalerate) to form 3-carboxy-3-hydroxy-4-methylpentanoate (2-isopropylmalate). In Salmonella choleraesuis (strain SC-B67), this protein is 2-isopropylmalate synthase.